Consider the following 401-residue polypeptide: L-rhamnonate dehydratase (401 aa).

Substrate-binding residues include histidine 29 and arginine 55. 3 residues coordinate Mg(2+): aspartate 222, glutamate 248, and glutamate 276. The Proton acceptor role is filled by histidine 325. Substrate is bound at residue glutamate 345.

Belongs to the mandelate racemase/muconate lactonizing enzyme family. RhamD subfamily. As to quaternary structure, homooctamer; tetramer of dimers. Mg(2+) is required as a cofactor.

It catalyses the reaction L-rhamnonate = 2-dehydro-3-deoxy-L-rhamnonate + H2O. Its function is as follows. Catalyzes the dehydration of L-rhamnonate to 2-keto-3-deoxy-L-rhamnonate (KDR). The chain is L-rhamnonate dehydratase from Escherichia coli O157:H7.